The following is a 530-amino-acid chain: ATP synthase subunit alpha (530 aa).

An ATP-binding site is contributed by 169 to 176 (GDRQTGKT).

The protein belongs to the ATPase alpha/beta chains family. As to quaternary structure, F-type ATPases have 2 components, CF(1) - the catalytic core - and CF(0) - the membrane proton channel. CF(1) has five subunits: alpha(3), beta(3), gamma(1), delta(1), epsilon(1). CF(0) has three main subunits: a(1), b(2) and c(9-12). The alpha and beta chains form an alternating ring which encloses part of the gamma chain. CF(1) is attached to CF(0) by a central stalk formed by the gamma and epsilon chains, while a peripheral stalk is formed by the delta and b chains.

It is found in the cell membrane. It carries out the reaction ATP + H2O + 4 H(+)(in) = ADP + phosphate + 5 H(+)(out). Its function is as follows. Produces ATP from ADP in the presence of a proton gradient across the membrane. The alpha chain is a regulatory subunit. The protein is ATP synthase subunit alpha of Mycoplasmopsis synoviae (strain 53) (Mycoplasma synoviae).